The following is a 545-amino-acid chain: SLAIN motif-containing protein 1 (545 aa).

Positions 14–53 (TTNGLVANAELEVKKLQELVRKLEKQNEQLRNRASAVSNC) form a coiled coil. Composition is skewed to low complexity over residues 268-286 (TTSTCSSVSRPRSSFSLYS) and 466-481 (IPSSTSLQSLSSSGIP). 2 disordered regions span residues 268–342 (TTST…IRDC) and 461–526 (QGGS…LQPP). Over residues 503-522 (STANGSSIPRSKIAQPQRSF) the composition is skewed to polar residues.

Belongs to the SLAIN motif-containing family.

The protein localises to the cytoplasm. It localises to the cytoskeleton. Microtubule plus-end tracking protein that might be involved in the regulation of cytoplasmic microtubule dynamics, microtubule organization and microtubule elongation. This is SLAIN motif-containing protein 1 (slain1) from Xenopus tropicalis (Western clawed frog).